A 262-amino-acid polypeptide reads, in one-letter code: Phosphate import ATP-binding protein PstB 2 (262 aa).

The 240-residue stretch at 18-257 (FVVRNLDLFY…PSDRRTEDYI (240 aa)) folds into the ABC transporter domain. 50-57 (GPSGCGKS) contacts ATP.

The protein belongs to the ABC transporter superfamily. Phosphate importer (TC 3.A.1.7) family. The complex is composed of two ATP-binding proteins (PstB), two transmembrane proteins (PstC and PstA) and a solute-binding protein (PstS).

Its subcellular location is the cell membrane. The catalysed reaction is phosphate(out) + ATP + H2O = ADP + 2 phosphate(in) + H(+). Part of the ABC transporter complex PstSACB involved in phosphate import. Responsible for energy coupling to the transport system. This chain is Phosphate import ATP-binding protein PstB 2, found in Symbiobacterium thermophilum (strain DSM 24528 / JCM 14929 / IAM 14863 / T).